Here is a 63-residue protein sequence, read N- to C-terminus: Keratin-associated protein 19-8 (63 aa).

It belongs to the KRTAP type 19 family. In terms of assembly, interacts with hair keratins.

Functionally, in the hair cortex, hair keratin intermediate filaments are embedded in an interfilamentous matrix, consisting of hair keratin-associated proteins (KRTAP), which are essential for the formation of a rigid and resistant hair shaft through their extensive disulfide bond cross-linking with abundant cysteine residues of hair keratins. The matrix proteins include the high-sulfur and high-glycine-tyrosine keratins. This is Keratin-associated protein 19-8 (KRTAP19-8) from Homo sapiens (Human).